The primary structure comprises 393 residues: Protein TsgA (393 aa).

A run of 12 helical transmembrane segments spans residues 11–31 (WISF…GMVM), 51–71 (FLNA…EIVP), 78–98 (FGFL…SLAL), 101–121 (AAMF…TFLI), 134–154 (LLFT…IAAF), 162–182 (WYWV…LTFG), 206–226 (IGVL…LGFI), 245–265 (TLVS…SFIL), 273–293 (ILTV…TGTP), 297–317 (AWSI…IITL), 332–352 (FVLT…GPIV), and 361–381 (LLTA…LGFV).

The protein belongs to the major facilitator superfamily. TsgA family.

The protein localises to the cell inner membrane. This Shigella dysenteriae serotype 1 (strain Sd197) protein is Protein TsgA.